A 150-amino-acid chain; its full sequence is Ribosome maturation factor RimP (150 aa).

Belongs to the RimP family.

It is found in the cytoplasm. Its function is as follows. Required for maturation of 30S ribosomal subunits. In Salmonella dublin (strain CT_02021853), this protein is Ribosome maturation factor RimP.